The chain runs to 428 residues: Chaperone SurA (428 aa).

A signal peptide spans Met-1–Ala-20. PpiC domains are found at residues Ser-171–Asp-272 and Val-282–Asp-382.

It is found in the periplasm. The enzyme catalyses [protein]-peptidylproline (omega=180) = [protein]-peptidylproline (omega=0). Its function is as follows. Chaperone involved in the correct folding and assembly of outer membrane proteins. Recognizes specific patterns of aromatic residues and the orientation of their side chains, which are found more frequently in integral outer membrane proteins. May act in both early periplasmic and late outer membrane-associated steps of protein maturation. The chain is Chaperone SurA from Shigella dysenteriae serotype 1 (strain Sd197).